A 97-amino-acid polypeptide reads, in one-letter code: Aspartyl/glutamyl-tRNA(Asn/Gln) amidotransferase subunit C (97 aa).

This sequence belongs to the GatC family. In terms of assembly, heterotrimer of A, B and C subunits.

It carries out the reaction L-glutamyl-tRNA(Gln) + L-glutamine + ATP + H2O = L-glutaminyl-tRNA(Gln) + L-glutamate + ADP + phosphate + H(+). It catalyses the reaction L-aspartyl-tRNA(Asn) + L-glutamine + ATP + H2O = L-asparaginyl-tRNA(Asn) + L-glutamate + ADP + phosphate + 2 H(+). Its function is as follows. Allows the formation of correctly charged Asn-tRNA(Asn) or Gln-tRNA(Gln) through the transamidation of misacylated Asp-tRNA(Asn) or Glu-tRNA(Gln) in organisms which lack either or both of asparaginyl-tRNA or glutaminyl-tRNA synthetases. The reaction takes place in the presence of glutamine and ATP through an activated phospho-Asp-tRNA(Asn) or phospho-Glu-tRNA(Gln). In Picosynechococcus sp. (strain ATCC 27264 / PCC 7002 / PR-6) (Agmenellum quadruplicatum), this protein is Aspartyl/glutamyl-tRNA(Asn/Gln) amidotransferase subunit C.